Here is a 184-residue protein sequence, read N- to C-terminus: NADH-quinone oxidoreductase subunit B (184 aa).

Residues cysteine 63, cysteine 64, cysteine 128, and cysteine 158 each contribute to the [4Fe-4S] cluster site.

The protein belongs to the complex I 20 kDa subunit family. As to quaternary structure, NDH-1 is composed of 14 different subunits. Subunits NuoB, C, D, E, F, and G constitute the peripheral sector of the complex. [4Fe-4S] cluster is required as a cofactor.

The protein resides in the cell inner membrane. The catalysed reaction is a quinone + NADH + 5 H(+)(in) = a quinol + NAD(+) + 4 H(+)(out). NDH-1 shuttles electrons from NADH, via FMN and iron-sulfur (Fe-S) centers, to quinones in the respiratory chain. The immediate electron acceptor for the enzyme in this species is believed to be ubiquinone. Couples the redox reaction to proton translocation (for every two electrons transferred, four hydrogen ions are translocated across the cytoplasmic membrane), and thus conserves the redox energy in a proton gradient. This is NADH-quinone oxidoreductase subunit B from Xylella fastidiosa (strain M23).